Here is a 126-residue protein sequence, read N- to C-terminus: Aspartate 1-decarboxylase (126 aa).

The active-site Schiff-base intermediate with substrate; via pyruvic acid is the S25. A Pyruvic acid (Ser) modification is found at S25. T57 serves as a coordination point for substrate. Residue Y58 is the Proton donor of the active site. Residue 73–75 participates in substrate binding; sequence GGA.

The protein belongs to the PanD family. Heterooctamer of four alpha and four beta subunits. Requires pyruvate as cofactor. Is synthesized initially as an inactive proenzyme, which is activated by self-cleavage at a specific serine bond to produce a beta-subunit with a hydroxyl group at its C-terminus and an alpha-subunit with a pyruvoyl group at its N-terminus.

The protein localises to the cytoplasm. It catalyses the reaction L-aspartate + H(+) = beta-alanine + CO2. It functions in the pathway cofactor biosynthesis; (R)-pantothenate biosynthesis; beta-alanine from L-aspartate: step 1/1. In terms of biological role, catalyzes the pyruvoyl-dependent decarboxylation of aspartate to produce beta-alanine. The polypeptide is Aspartate 1-decarboxylase (Acinetobacter baylyi (strain ATCC 33305 / BD413 / ADP1)).